We begin with the raw amino-acid sequence, 381 residues long: Cytochrome b (381 aa).

Transmembrane regions (helical) follow at residues 34–54 (FGSL…FLAM), 78–99 (WLIR…YIHI), 114–134 (WNIG…GYVL), and 179–199 (FFAF…IHVL). Residues H84 and H98 each contribute to the heme b site. Heme b-binding residues include H183 and H197. H202 provides a ligand contact to a ubiquinone. Helical transmembrane passes span 227–247 (YKDA…ALFL), 289–309 (LGGV…PLLH), 321–341 (LTQV…WIGG), and 348–368 (FILI…IAMP).

This sequence belongs to the cytochrome b family. As to quaternary structure, the cytochrome bc1 complex contains 3 respiratory subunits (MT-CYB, CYC1 and UQCRFS1), 2 core proteins (UQCRC1 and UQCRC2) and probably 6 low-molecular weight proteins. The cofactor is heme b.

The protein resides in the mitochondrion inner membrane. In terms of biological role, component of the ubiquinol-cytochrome c reductase complex (complex III or cytochrome b-c1 complex) that is part of the mitochondrial respiratory chain. The b-c1 complex mediates electron transfer from ubiquinol to cytochrome c. Contributes to the generation of a proton gradient across the mitochondrial membrane that is then used for ATP synthesis. In Isurus paucus (Longfin mako shark), this protein is Cytochrome b (mt-cyb).